Here is a 533-residue protein sequence, read N- to C-terminus: CEP295 N-terminal-like protein (533 aa).

4 disordered regions span residues 1-40, 84-176, 286-333, and 370-399; these read MQRDTERAAQLSPSSEDEALVLRQKPLEMPAQEEDSTTLQ, RSMG…RVTR, LKAD…ETTE, and AGTSREQDDLLSLSPESGQEPPKSPLLEDE. The stretch at 40–72 forms a coiled coil; it reads QQWKARQLQRLAEELKAEWQEARLQQVRQAERL. Residues 107-126 show a composition bias toward basic and acidic residues; that stretch reads KERNRAAFREERGRREEHPR. The stretch at 416 to 531 forms a coiled coil; that stretch reads MALRQKQKAE…ARKRLQEFQK (116 aa).

As to expression, expressed in mature spermatozoa (at protein level). Detected in retina, lung and kidney. In brain, highly expressed in brain-stem, cerebral cortex and thalamus with lesser expression in cerebellum and hippocampus.

It localises to the cell projection. Its subcellular location is the cilium. The protein is CEP295 N-terminal-like protein of Mus musculus (Mouse).